The primary structure comprises 530 residues: Light-independent protochlorophyllide reductase subunit B (530 aa).

A [4Fe-4S] cluster-binding site is contributed by Asp36. Residue Asp287 is the Proton donor of the active site. Position 422-423 (422-423 (GL)) interacts with substrate. The tract at residues 453–472 (PAVQTASSEPQPSAIETPSA) is disordered. The span at 454–463 (AVQTASSEPQ) shows a compositional bias: polar residues.

This sequence belongs to the ChlB/BchB/BchZ family. In terms of assembly, protochlorophyllide reductase is composed of three subunits; BchL, BchN and BchB. Forms a heterotetramer of two BchB and two BchN subunits. [4Fe-4S] cluster is required as a cofactor.

The enzyme catalyses chlorophyllide a + oxidized 2[4Fe-4S]-[ferredoxin] + 2 ADP + 2 phosphate = protochlorophyllide a + reduced 2[4Fe-4S]-[ferredoxin] + 2 ATP + 2 H2O. It functions in the pathway porphyrin-containing compound metabolism; bacteriochlorophyll biosynthesis (light-independent). Its function is as follows. Component of the dark-operative protochlorophyllide reductase (DPOR) that uses Mg-ATP and reduced ferredoxin to reduce ring D of protochlorophyllide (Pchlide) to form chlorophyllide a (Chlide). This reaction is light-independent. The NB-protein (BchN-BchB) is the catalytic component of the complex. This is Light-independent protochlorophyllide reductase subunit B from Rhodopseudomonas palustris (strain BisB18).